Here is a 577-residue protein sequence, read N- to C-terminus: Arginine--tRNA ligase (577 aa).

A 'HIGH' region motif is present at residues 124-132; sequence VAKEMHVGH.

The protein belongs to the class-I aminoacyl-tRNA synthetase family. Monomer.

Its subcellular location is the cytoplasm. It catalyses the reaction tRNA(Arg) + L-arginine + ATP = L-arginyl-tRNA(Arg) + AMP + diphosphate. The polypeptide is Arginine--tRNA ligase (Salmonella typhi).